The sequence spans 363 residues: Mitochondrial RNA-splicing protein MRS1 (363 aa).

In terms of assembly, homodimer. Forms a ribonucleoprotein complex composed of maturase bI3 and 2 dimers of MRS1 that assemble around the bI3 RNA.

The protein resides in the mitochondrion matrix. Function in mitochondrial RNA splicing in the excision of mitochondrial group I introns aI5 beta from COX1 and bI3 from COB transcripts and thus would be involved in obtaining the correct structure of the intron, to allow the RNA catalyzed reactions to occur. The chain is Mitochondrial RNA-splicing protein MRS1 (MRS1) from Saccharomyces cerevisiae (strain ATCC 204508 / S288c) (Baker's yeast).